A 663-amino-acid chain; its full sequence is DNA topoisomerase 1 (663 aa).

The Toprim domain occupies 4–137; sequence SWLIITEKDN…TVKVDRVRYS (134 aa). Mg(2+) is bound by residues E10 and D106. The 404-residue stretch at 155–558 folds into the Topo IA-type catalytic domain; that stretch reads DFNLANAALA…ESREMLLQIL (404 aa). Residues 193–198 form an interaction with DNA region; the sequence is SVGRVQ. Y306 (O-(5'-phospho-DNA)-tyrosine intermediate) is an active-site residue. The C4-type 1 zinc-finger motif lies at 583-610; it reads CPECGGELVVRQSKAGKRFIGCSNYPDC. The C4-type 2; atypical zinc-finger motif lies at 629 to 653; it reads CKEHEIKEVKIRTKKGYWNLGCPYC.

Belongs to the type IA topoisomerase family. As to quaternary structure, monomer. Mg(2+) is required as a cofactor.

The enzyme catalyses ATP-independent breakage of single-stranded DNA, followed by passage and rejoining.. Its function is as follows. Releases the supercoiling and torsional tension of DNA, which is introduced during the DNA replication and transcription, by transiently cleaving and rejoining one strand of the DNA duplex. Introduces a single-strand break via transesterification at a target site in duplex DNA. The scissile phosphodiester is attacked by the catalytic tyrosine of the enzyme, resulting in the formation of a DNA-(5'-phosphotyrosyl)-enzyme intermediate and the expulsion of a 3'-OH DNA strand. The free DNA strand then undergoes passage around the unbroken strand, thus removing DNA supercoils. Finally, in the religation step, the DNA 3'-OH attacks the covalent intermediate to expel the active-site tyrosine and restore the DNA phosphodiester backbone. In Archaeoglobus fulgidus (strain ATCC 49558 / DSM 4304 / JCM 9628 / NBRC 100126 / VC-16), this protein is DNA topoisomerase 1.